The chain runs to 261 residues: tRNA pseudouridine synthase A (261 aa).

Asp-51 serves as the catalytic Nucleophile. Residue Tyr-109 participates in substrate binding.

Belongs to the tRNA pseudouridine synthase TruA family. Homodimer.

It carries out the reaction uridine(38/39/40) in tRNA = pseudouridine(38/39/40) in tRNA. Its function is as follows. Formation of pseudouridine at positions 38, 39 and 40 in the anticodon stem and loop of transfer RNAs. This Shewanella sp. (strain ANA-3) protein is tRNA pseudouridine synthase A.